The chain runs to 1038 residues: Kinesin-like protein KIN-5B (1038 aa).

Residues 1-63 (MAQTPNPSRR…GGGGGGGSEM (63 aa)) form a disordered region. A compositionally biased stretch (basic and acidic residues) spans 24–34 (RPERRQLELRW). A compositionally biased stretch (gly residues) spans 49–61 (GLTGGGGGGGGGS). In terms of domain architecture, Kinesin motor spans 69–410 (NVQVVLRCRP…LDYAYRAKSI (342 aa)). 154–161 (GQTGTGKT) is a binding site for ATP. Residues 453 to 502 (QERFALEEAEKKTMRDKIEYLETQNKELKMNIESCKKEYLDLEEAHSRAN) adopt a coiled-coil conformation. A disordered region spans residues 1013–1038 (DKGKRYVDQGTRTPRSPLMPVNHYNK).

The protein belongs to the TRAFAC class myosin-kinesin ATPase superfamily. Kinesin family. KIN-5/BimC subfamily.

Its subcellular location is the cytoplasm. The protein resides in the cytoskeleton. It is found in the spindle. In terms of biological role, responsible for microtubule translocation. May be important for the organization of phragmoplast-specific arrays of microtubules. Plays an essential role in stabilizing the mitotic spindle. Required during mitotic cytokinesis. In Oryza sativa subsp. japonica (Rice), this protein is Kinesin-like protein KIN-5B.